The chain runs to 526 residues: GMP synthase [glutamine-hydrolyzing] (526 aa).

One can recognise a Glutamine amidotransferase type-1 domain in the interval 4 to 204; sequence KIVVLDFGSQ…AHAICGCSGD (201 aa). C87 functions as the Nucleophile in the catalytic mechanism. Residues H178 and E180 contribute to the active site. The 197-residue stretch at 205–401 folds into the GMPS ATP-PPase domain; that stretch reads WTPASFVEEQ…LDVPDPIVGR (197 aa). 232-238 contributes to the ATP binding site; the sequence is SGGVDSS.

Homodimer.

The catalysed reaction is XMP + L-glutamine + ATP + H2O = GMP + L-glutamate + AMP + diphosphate + 2 H(+). The protein operates within purine metabolism; GMP biosynthesis; GMP from XMP (L-Gln route): step 1/1. Its function is as follows. Catalyzes the synthesis of GMP from XMP. This is GMP synthase [glutamine-hydrolyzing] from Salinibacter ruber (strain DSM 13855 / M31).